The sequence spans 264 residues: Thymidylate synthase (264 aa).

Residue Arg21 coordinates dUMP. Position 51 (His51) interacts with (6R)-5,10-methylene-5,6,7,8-tetrahydrofolate. 126–127 contacts dUMP; sequence RR. The active-site Nucleophile is Cys146. Residues 166 to 169, Asn177, and 207 to 209 each bind dUMP; these read RSAD and HLY. Asp169 provides a ligand contact to (6R)-5,10-methylene-5,6,7,8-tetrahydrofolate. Ala263 lines the (6R)-5,10-methylene-5,6,7,8-tetrahydrofolate pocket.

It belongs to the thymidylate synthase family. Bacterial-type ThyA subfamily. In terms of assembly, homodimer.

It is found in the cytoplasm. It catalyses the reaction dUMP + (6R)-5,10-methylene-5,6,7,8-tetrahydrofolate = 7,8-dihydrofolate + dTMP. It functions in the pathway pyrimidine metabolism; dTTP biosynthesis. In terms of biological role, catalyzes the reductive methylation of 2'-deoxyuridine-5'-monophosphate (dUMP) to 2'-deoxythymidine-5'-monophosphate (dTMP) while utilizing 5,10-methylenetetrahydrofolate (mTHF) as the methyl donor and reductant in the reaction, yielding dihydrofolate (DHF) as a by-product. This enzymatic reaction provides an intracellular de novo source of dTMP, an essential precursor for DNA biosynthesis. The protein is Thymidylate synthase of Legionella pneumophila (strain Corby).